A 104-amino-acid polypeptide reads, in one-letter code: Flagellar hook-basal body complex protein FliE (104 aa).

The protein belongs to the FliE family.

It is found in the bacterial flagellum basal body. This chain is Flagellar hook-basal body complex protein FliE, found in Salmonella agona (strain SL483).